The sequence spans 126 residues: Glycine cleavage system H protein (126 aa).

One can recognise a Lipoyl-binding domain in the interval 22-104 (TVTIGVTDFA…YGEGWMIKIK (83 aa)). Lys-63 carries the post-translational modification N6-lipoyllysine.

Belongs to the GcvH family. As to quaternary structure, the glycine cleavage system is composed of four proteins: P, T, L and H. (R)-lipoate serves as cofactor.

The glycine cleavage system catalyzes the degradation of glycine. The H protein shuttles the methylamine group of glycine from the P protein to the T protein. This Christiangramia forsetii (strain DSM 17595 / CGMCC 1.15422 / KT0803) (Gramella forsetii) protein is Glycine cleavage system H protein.